Reading from the N-terminus, the 67-residue chain is Large ribosomal subunit protein uL29 (67 aa).

This sequence belongs to the universal ribosomal protein uL29 family.

This is Large ribosomal subunit protein uL29 from Ehrlichia canis (strain Jake).